Consider the following 146-residue polypeptide: MKLLIDADACPREVLRTSLELGRRFQVPVWTVASFNHVIASDRHVVVGGAAQETDIKVMNLAEPGDVAVTQDFGLAAMLIGKGVRCLGPSGRLYDAERIDLLLEERELKARFRRGGGRTKGPKKRTAEEDRRFAGALETLLREWNG.

Belongs to the UPF0178 family.

This chain is UPF0178 protein Helmi_09130, found in Heliobacterium modesticaldum (strain ATCC 51547 / Ice1).